A 643-amino-acid chain; its full sequence is 1-deoxy-D-xylulose-5-phosphate synthase (643 aa).

Thiamine diphosphate is bound by residues His78 and 119–121 (AHS). Asp150 contacts Mg(2+). Thiamine diphosphate-binding positions include 151–152 (GS), Asn179, Tyr288, and Glu370. A Mg(2+)-binding site is contributed by Asn179.

The protein belongs to the transketolase family. DXPS subfamily. As to quaternary structure, homodimer. Mg(2+) is required as a cofactor. It depends on thiamine diphosphate as a cofactor.

It carries out the reaction D-glyceraldehyde 3-phosphate + pyruvate + H(+) = 1-deoxy-D-xylulose 5-phosphate + CO2. It participates in metabolic intermediate biosynthesis; 1-deoxy-D-xylulose 5-phosphate biosynthesis; 1-deoxy-D-xylulose 5-phosphate from D-glyceraldehyde 3-phosphate and pyruvate: step 1/1. In terms of biological role, catalyzes the acyloin condensation reaction between C atoms 2 and 3 of pyruvate and glyceraldehyde 3-phosphate to yield 1-deoxy-D-xylulose-5-phosphate (DXP). This Brucella melitensis biotype 2 (strain ATCC 23457) protein is 1-deoxy-D-xylulose-5-phosphate synthase.